The primary structure comprises 497 residues: Serine hydroxymethyltransferase (497 aa).

(6S)-5,6,7,8-tetrahydrofolate is bound by residues leucine 176 and 180–182 (GHL). Lysine 289 carries the post-translational modification N6-(pyridoxal phosphate)lysine.

It belongs to the SHMT family. In terms of assembly, homodimer. The cofactor is pyridoxal 5'-phosphate.

The protein localises to the cytoplasm. It carries out the reaction (6R)-5,10-methylene-5,6,7,8-tetrahydrofolate + glycine + H2O = (6S)-5,6,7,8-tetrahydrofolate + L-serine. It functions in the pathway one-carbon metabolism; tetrahydrofolate interconversion. The protein operates within amino-acid biosynthesis; glycine biosynthesis; glycine from L-serine: step 1/1. In terms of biological role, catalyzes the reversible interconversion of serine and glycine with tetrahydrofolate (THF) serving as the one-carbon carrier. This reaction serves as the major source of one-carbon groups required for the biosynthesis of purines, thymidylate, methionine, and other important biomolecules. Also exhibits THF-independent aldolase activity toward beta-hydroxyamino acids, producing glycine and aldehydes, via a retro-aldol mechanism. This chain is Serine hydroxymethyltransferase, found in Chlamydia trachomatis serovar A (strain ATCC VR-571B / DSM 19440 / HAR-13).